The primary structure comprises 435 residues: Oocyte zinc finger protein XlCOF22 (435 aa).

Residues 71-92 form a disordered region; that stretch reads NANTSAHFSRNRDSDKHERTHT. Residues 80 to 91 are compositionally biased toward basic and acidic residues; it reads RNRDSDKHERTH. 12 C2H2-type zinc fingers span residues 97 to 120, 126 to 148, 154 to 176, 182 to 204, 210 to 232, 238 to 260, 266 to 288, 294 to 316, 322 to 345, 351 to 373, 379 to 402, and 408 to 430; these read HSCSQCGKCFSSSSDLLAHRRQSH, FSCSECGKCFSFRSRLIDHQRTH, FCCFQCGKSFSVRSRFLDHRRTH, FSCLECGKCFLFRSRLLEHQRTH, FSCLKCGKCFSVRSRLKDHQRTH, FSCLECGKSFSFRPCLIDHQRTH, FSCFQCGKCFSFQSRLINHQRTH, FSCSECGKSFSNQSCLRVHQRTH, YSCSECGKSFVTSSQLAVHRRRTH, FSCSECGKCFSNQSCLRVHQRTH, FSCSECGKSFVTSSKLASHQRQTH, and VSCSECGKCFTRKRSLKVHFKIH.

Belongs to the krueppel C2H2-type zinc-finger protein family.

Its subcellular location is the nucleus. Functionally, may be involved in transcriptional regulation. This Xenopus laevis (African clawed frog) protein is Oocyte zinc finger protein XlCOF22.